Here is a 761-residue protein sequence, read N- to C-terminus: Zinc finger protein 711 (761 aa).

Residues Lys-224, Lys-235, and Lys-296 each participate in a glycyl lysine isopeptide (Lys-Gly) (interchain with G-Cter in SUMO2) cross-link. 5 consecutive C2H2-type zinc fingers follow at residues 383-408, 414-436, 476-499, 505-527, and 533-556; these read YPCHICTKKFKSRGFLKRHMKNHPDH, YQCTDCDFTTNKKVSFHNHLESH, HKCKYCDYETAEQGLLNRHLLAVH, HVCVECGKGFRHPSELKKHMRTH, and YQCQYCAFRCADQSNLKTHIKSKH. The C2H2-type 6; atypical zinc finger occupies 562-584; it reads YKCEHCPQAFGDERELQRHLDLF. Residues Cys-564, Cys-567, and His-580 each contribute to the Zn(2+) site. 6 consecutive C2H2-type zinc fingers follow at residues 590-613, 619-641, 647-670, 676-698, 704-727, and 733-755; these read HQCPHCDHKSTNSSDLKRHIISVH, HKCEVCDKGFHRPSELKKHSDIH, HQCRHCDFKTSDPFILSGHILSVH, LKCKRCKRGFRQQNELKKHMKTH, YQCEYCEYSTTDASGFKRHVISIH, and HRCEFCKKGFRRPSEKKQHIMRH.

Belongs to the krueppel C2H2-type zinc-finger protein family. As to quaternary structure, interacts with PHF8.

It is found in the nucleus. Transcription regulator required for brain development. Probably acts as a transcription factor that binds to the promoter of target genes and recruits PHF8 histone demethylase, leading to activated expression of genes involved in neuron development, such as KDM5C. May compete with transcription factor ARX for activation of expression of KDM5C. The chain is Zinc finger protein 711 (Znf711) from Mus musculus (Mouse).